A 312-amino-acid chain; its full sequence is MKVAVLGAAGGIGQALALLLKTQLPSGSELSLYDIAPVTPGVAVDLSHIPTAVKIKGFSGENARPALEGADVVLISAGVARKPGMDRSDLFNVNAGIVKNLVQQIAETCPKACVGIITNPVNTTVAIAAEVLKKAGVYDKNKLFGVTTLDIIRSNTFVAELKGKSPSDIEVPVIGGHSGVTILPLLSQIPGVSFSEQEVADLTKRIQNAGTEVVEAKAGGGSATLSMGQAAARFGLSLVRALQGEKGVVECAYVEGDGEHARFFSQPLLLGKNGIEERQSIGKLSAFEQQAMEGMLDTLKKDITLGEEFVSK.

Residues 7–13 (GAAGGIG) and Asp-34 contribute to the NAD(+) site. Substrate contacts are provided by Arg-81 and Arg-87. Residues Asn-94 and 117–119 (ITN) contribute to the NAD(+) site. Residues Asn-119 and Arg-153 each contribute to the substrate site. The Proton acceptor role is filled by His-177. Met-227 contributes to the NAD(+) binding site.

This sequence belongs to the LDH/MDH superfamily. MDH type 1 family. Homodimer.

The enzyme catalyses (S)-malate + NAD(+) = oxaloacetate + NADH + H(+). Its function is as follows. Catalyzes the reversible oxidation of malate to oxaloacetate. The protein is Malate dehydrogenase of Enterobacter sp. (strain 638).